The sequence spans 216 residues: Putative germin-like protein 2-1 (216 aa).

The N-terminal stretch at 1–21 (MASTWFFLLALLAVSISNAFA) is a signal peptide. C31 and C46 are oxidised to a cystine. The Cupin type-1 domain maps to 60–210 (SGLHMAGNTS…AFQVEKKIVD (151 aa)). A glycan (N-linked (GlcNAc...) asparagine) is linked at N67. The Mn(2+) site is built by H108, H110, E115, and H156.

Belongs to the germin family. As to quaternary structure, oligomer (believed to be a pentamer but probably hexamer).

The protein localises to the secreted. It is found in the extracellular space. It localises to the apoplast. Its function is as follows. May play a role in plant defense. Probably has no oxalate oxidase activity even if the active site is conserved. This chain is Putative germin-like protein 2-1, found in Oryza sativa subsp. japonica (Rice).